A 63-amino-acid chain; its full sequence is 2-hydroxymuconate tautomerase (63 aa).

The Proton acceptor; via imino nitrogen role is filled by proline 2.

This sequence belongs to the 4-oxalocrotonate tautomerase family. Homohexamer.

The catalysed reaction is (2Z,4E)-2-hydroxyhexa-2,4-dienedioate = (3E)-2-oxohex-3-enedioate. It functions in the pathway aromatic compound metabolism; salicylate degradation. Catalyzes the ketonization of 2-hydroxymuconate stereoselectively to yield 2-oxo-3-hexenedioate. The chain is 2-hydroxymuconate tautomerase (tdnL) from Pseudomonas putida (Arthrobacter siderocapsulatus).